Consider the following 386-residue polypeptide: Galactokinase (386 aa).

Substrate is bound at residue 35–38; that stretch reads EHTD. ATP-binding positions include S69 and 125–131; that span reads GAGLSSS. Mg(2+)-binding residues include S131 and E163. D175 (proton acceptor) is an active-site residue. Y224 contributes to the substrate binding site.

This sequence belongs to the GHMP kinase family. GalK subfamily.

It localises to the cytoplasm. It catalyses the reaction alpha-D-galactose + ATP = alpha-D-galactose 1-phosphate + ADP + H(+). It participates in carbohydrate metabolism; galactose metabolism. Its function is as follows. Catalyzes the transfer of the gamma-phosphate of ATP to D-galactose to form alpha-D-galactose-1-phosphate (Gal-1-P). This is Galactokinase from Vibrio vulnificus (strain YJ016).